The chain runs to 352 residues: Lipoyl synthase (352 aa).

A disordered region spans residues 1–21 (MTSVDTPTPHGGTPAPAPATA). C71, C76, C82, C97, C101, C104, and S308 together coordinate [4Fe-4S] cluster. The Radical SAM core domain maps to 83–297 (WEDREATFLI…SRVAEEIGFA (215 aa)).

Belongs to the radical SAM superfamily. Lipoyl synthase family. [4Fe-4S] cluster is required as a cofactor.

It is found in the cytoplasm. It catalyses the reaction [[Fe-S] cluster scaffold protein carrying a second [4Fe-4S](2+) cluster] + N(6)-octanoyl-L-lysyl-[protein] + 2 oxidized [2Fe-2S]-[ferredoxin] + 2 S-adenosyl-L-methionine + 4 H(+) = [[Fe-S] cluster scaffold protein] + N(6)-[(R)-dihydrolipoyl]-L-lysyl-[protein] + 4 Fe(3+) + 2 hydrogen sulfide + 2 5'-deoxyadenosine + 2 L-methionine + 2 reduced [2Fe-2S]-[ferredoxin]. It functions in the pathway protein modification; protein lipoylation via endogenous pathway; protein N(6)-(lipoyl)lysine from octanoyl-[acyl-carrier-protein]: step 2/2. Its function is as follows. Catalyzes the radical-mediated insertion of two sulfur atoms into the C-6 and C-8 positions of the octanoyl moiety bound to the lipoyl domains of lipoate-dependent enzymes, thereby converting the octanoylated domains into lipoylated derivatives. The protein is Lipoyl synthase of Nocardia farcinica (strain IFM 10152).